Consider the following 515-residue polypeptide: Sodium/hydrogen exchanger 9B1 (515 aa).

Over residues 1-10 (MHTTESKNEH) the composition is skewed to basic and acidic residues. Positions 1 to 32 (MHTTESKNEHLEDENFQTSTTPQSLIDPNNTA) are disordered. Polar residues predominate over residues 16–32 (FQTSTTPQSLIDPNNTA). 13 consecutive transmembrane segments (helical) span residues 66–86 (VIIT…SILG), 95–115 (LFGL…LQLI), 116–136 (RIPL…GFTI), 152–172 (WSSI…GLGL), 187–207 (LAVG…HFIM), 215–235 (FLLG…YMMV), 260–280 (ILAI…GGIL), 284–304 (IASI…GFFV), 337–357 (IGLH…AGTK), 368–388 (IITT…GAEV), 407–427 (LALC…GFSF), 431–451 (IFIA…GPLA), and 472–492 (VAFL…GILG).

The protein belongs to the monovalent cation:proton antiporter 1 (CPA1) transporter (TC 2.A.36) family. As to expression, expressed only in the testis.

The protein resides in the cell projection. It is found in the cilium. Its subcellular location is the flagellum membrane. Its function is as follows. Sperm-specific Na(+)/H(+) exchanger involved in intracellular pH regulation of spermatozoa. Involved in sperm motility and fertility. In Homo sapiens (Human), this protein is Sodium/hydrogen exchanger 9B1.